A 356-amino-acid chain; its full sequence is Putative [LysW]-L-2-aminoadipate/[LysW]-L-glutamate phosphate reductase (356 aa).

11 to 14 (SGYT) is a binding site for NADP(+). Residue Cys-157 is part of the active site. Asn-323 serves as a coordination point for NADP(+).

Belongs to the NAGSA dehydrogenase family. Type 1 subfamily. LysY sub-subfamily.

The protein resides in the cytoplasm. The catalysed reaction is [amino-group carrier protein]-C-terminal-N-(1-carboxy-5-oxopentan-1-yl)-L-glutamine + phosphate + NADP(+) = [amino-group carrier protein]-C-terminal-N-(1-carboxy-5-phosphooxy-5-oxopentan-1-yl)-L-glutamine + NADPH + H(+). The enzyme catalyses [amino-group carrier protein]-C-terminal-gamma-(L-glutamyl-5-semialdehyde)-L-glutamate + phosphate + NADP(+) = [amino-group carrier protein]-C-terminal-gamma-(5-phospho-L-glutamyl)-L-glutamate + NADPH + H(+). The protein operates within amino-acid biosynthesis; L-lysine biosynthesis via AAA pathway; L-lysine from L-alpha-aminoadipate (Thermus route): step 3/5. Its pathway is amino-acid biosynthesis; L-arginine biosynthesis. In terms of biological role, involved in both the arginine and lysine biosynthetic pathways. The polypeptide is Putative [LysW]-L-2-aminoadipate/[LysW]-L-glutamate phosphate reductase (Ignicoccus hospitalis (strain KIN4/I / DSM 18386 / JCM 14125)).